The chain runs to 118 residues: cAMP-responsive element-binding protein-like 2 (118 aa).

Residues 1 to 25 are disordered; it reads MDDSKVSGGKVKKPGKRGRKPAKID. Residues 10–21 are compositionally biased toward basic residues; that stretch reads KVKKPGKRGRKP. Residues 23–86 form the bZIP domain; it reads KIDLKAKLER…AAMDQGKIPS (64 aa). Residues 29–60 are basic motif; sequence KLERSRQSARECRARKKLRYQYLEELVSSRER. The leucine-zipper stretch occupies residues 62-69; the sequence is ICALREEL.

Belongs to the bZIP family. ATF subfamily.

The protein resides in the nucleus. Probable regulator of creb1 transcriptional activity which is involved in adipose cells differentiation. May also play a regulatory role in the cell cycle. The chain is cAMP-responsive element-binding protein-like 2 (crebl2) from Xenopus tropicalis (Western clawed frog).